The chain runs to 63 residues: Large ribosomal subunit protein uL29 (63 aa).

The protein belongs to the universal ribosomal protein uL29 family.

The protein is Large ribosomal subunit protein uL29 of Azotobacter vinelandii (strain DJ / ATCC BAA-1303).